Consider the following 152-residue polypeptide: Histone H2B.1 (152 aa).

Basic and acidic residues predominate over residues M1 to P28. Residues M1–K60 are disordered. N6-acetyllysine is present on residues K7 and K37. K148 is covalently cross-linked (Glycyl lysine isopeptide (Lys-Gly) (interchain with G-Cter in ubiquitin)).

This sequence belongs to the histone H2B family. As to quaternary structure, the nucleosome is a histone octamer containing two molecules each of H2A, H2B, H3 and H4 assembled in one H3-H4 heterotetramer and two H2A-H2B heterodimers. The octamer wraps approximately 147 bp of DNA. Can be acetylated to form H2BK6ac and H2BK33ac. Post-translationally, monoubiquitinated to form H2BK143ub1; may give a specific tag for epigenetic transcriptional activation.

Its subcellular location is the nucleus. The protein localises to the chromosome. In terms of biological role, core component of nucleosome. Nucleosomes wrap and compact DNA into chromatin, limiting DNA accessibility to the cellular machineries which require DNA as a template. Histones thereby play a central role in transcription regulation, DNA repair, DNA replication and chromosomal stability. DNA accessibility is regulated via a complex set of post-translational modifications of histones, also called histone code, and nucleosome remodeling. This Triticum aestivum (Wheat) protein is Histone H2B.1.